A 525-amino-acid polypeptide reads, in one-letter code: GMP synthase [glutamine-hydrolyzing] (525 aa).

One can recognise a Glutamine amidotransferase type-1 domain in the interval 8 to 207 (KILILDFGSQ…ALDICECEAN (200 aa)). C85 acts as the Nucleophile in catalysis. Active-site residues include H181 and E183. Residues 208–400 (WKPTSIIEDA…LGLPYDMLYR (193 aa)) form the GMPS ATP-PPase domain. 235-241 (SGGVDSS) is a binding site for ATP.

Homodimer.

It catalyses the reaction XMP + L-glutamine + ATP + H2O = GMP + L-glutamate + AMP + diphosphate + 2 H(+). Its pathway is purine metabolism; GMP biosynthesis; GMP from XMP (L-Gln route): step 1/1. In terms of biological role, catalyzes the synthesis of GMP from XMP. The polypeptide is GMP synthase [glutamine-hydrolyzing] (Shewanella sediminis (strain HAW-EB3)).